The sequence spans 1545 residues: ATP-binding cassette sub-family C member 2 (1545 aa).

At 1-27 (MLEKFCNSTFWNSSFLDSPEADLPLCF) the chain is on the extracellular side. Residues Asn-7 and Asn-12 are each glycosylated (N-linked (GlcNAc...) asparagine). The helical transmembrane segment at 28 to 48 (EQTVLVWIPLGYLWLLAPWQL) threads the bilayer. Over 49–68 (LHVYKSRTKRSSTTKLYLAK) the chain is Cytoplasmic. Residues 69 to 89 (QVFVGFLLILAAIELALVLTE) traverse the membrane as a helical segment. Residues 90–93 (DSGQ) are Extracellular-facing. The chain crosses the membrane as a helical span at residues 94 to 114 (ATVPAVRYTNPSLYLGTWLLV). Over 115-126 (LLIQYSRQWCVQ) the chain is Cytoplasmic. Residues 127–147 (KNSWFLSLFWILSILCGTFQF) traverse the membrane as a helical segment. Residues 148–165 (QTLIRTLLQGDNSNLAYS) are Extracellular-facing. The chain crosses the membrane as a helical span at residues 166–186 (CLFFISYGFQILILIFSAFSE). Topologically, residues 187 to 313 (NNESSNNPSS…DVPKSWLMKA (127 aa)) are cytoplasmic. A disordered region spans residues 253–284 (ARRALQRRQEKSSQQNSGARLPGLNKNQSQSQ). Phosphoserine occurs at positions 281 and 283. The helical transmembrane segment at 314 to 334 (LFKTFYMVLLKSFLLKLVNDI) threads the bilayer. The ABC transmembrane type-1 1 domain occupies 322-605 (LLKSFLLKLV…LPMMISSMLQ (284 aa)). The Extracellular segment spans residues 335 to 360 (FTFVSPQLLKLLISFASDRDTYLWIG). A helical membrane pass occupies residues 361–381 (YLCAILLFTAALIQSFCLQCY). Residues 382-437 (FQLCFKLGVKVRTAIMASVYKKALTLSNLARKEYTVGETVNLMSVDAQKLMDVTNF) lie on the Cytoplasmic side of the membrane. The chain crosses the membrane as a helical span at residues 438–458 (MHMLWSSVLQIVLSIFFLWRE). Residues 459–461 (LGP) lie on the Extracellular side of the membrane. The chain crosses the membrane as a helical span at residues 462–482 (SVLAGVGVMVLVIPINAILST). At 483-544 (KSKTIQVKNM…NLLAFSQLQC (62 aa)) the chain is on the cytoplasmic side. The helical transmembrane segment at 545–565 (VVIFVFQLTPVLVSVVTFSVY) threads the bilayer. Residues 566–587 (VLVDSNNILDAQKAFTSITLFN) are Extracellular-facing. Residues 588–608 (ILRFPLSMLPMMISSMLQASV) traverse the membrane as a helical segment. Residues 609-971 (STERLEKYLG…VKFSIYLEYL (363 aa)) are Cytoplasmic-facing. In terms of domain architecture, ABC transporter 1 spans 637-861 (MQFSEASFTW…KGEFAKNLKT (225 aa)). 671-678 (GPVGSGKS) is a binding site for ATP. A phosphoserine mark is found at Ser-878, Ser-926, Ser-930, and Ser-938. The helical transmembrane segment at 972–992 (QAIGLFSIFFIILAFVMNSVA) threads the bilayer. In terms of domain architecture, ABC transmembrane type-1 2 spans 979 to 1264 (IFFIILAFVM…LVRMTSEIET (286 aa)). Topologically, residues 993–1033 (FIGSNLWLSAWTSDSKIFNSTDYPASQRDMRVGVYGALGLA) are extracellular. Asn-1011 carries an N-linked (GlcNAc...) asparagine glycan. A helical membrane pass occupies residues 1034–1054 (QGIFVFIAHFWSAFGFVHASN). Residues 1055 to 1097 (ILHKQLLNNILRAPMRFFDTTPTGRIVNRFAGDISTVDDTLPQ) are Cytoplasmic-facing. The helical transmembrane segment at 1098–1118 (SLRSWITCFLGIISTLVMICM) threads the bilayer. A topological domain (extracellular) is located at residue Ala-1119. The chain crosses the membrane as a helical span at residues 1120-1140 (TPVFTIIVIPLGIIYVSVQMF). The Cytoplasmic portion of the chain corresponds to 1141–1211 (YVSTSRQLRR…TSNRWLAIRL (71 aa)). A helical transmembrane segment spans residues 1212–1232 (ELVGNLTVFFSALMMVIYRDT). Residues 1233–1234 (LS) are Extracellular-facing. Residues 1235–1255 (GDTVGFVLSNALNITQTLNWL) form a helical membrane-spanning segment. The Cytoplasmic segment spans residues 1256-1545 (VRMTSEIETN…GIENVNSTKF (290 aa)). In terms of domain architecture, ABC transporter 2 spans 1300 to 1534 (IQFNNYQVRY…PGPFYFMAKE (235 aa)). Residue 1334-1341 (GRTGAGKS) participates in ATP binding. Ser-1438 carries the phosphoserine modification.

The protein belongs to the ABC transporter superfamily. ABCC family. Conjugate transporter (TC 3.A.1.208) subfamily. Expressed by polarized cells in liver, kidney and intestine. The highest expression is found in liver. Expressed in small intestine.

It is found in the apical cell membrane. It carries out the reaction ATP + H2O + xenobioticSide 1 = ADP + phosphate + xenobioticSide 2.. The catalysed reaction is an S-substituted glutathione(in) + ATP + H2O = an S-substituted glutathione(out) + ADP + phosphate + H(+). The enzyme catalyses taurolithocholate 3-sulfate(in) + ATP + H2O = taurolithocholate 3-sulfate(out) + ADP + phosphate + H(+). It catalyses the reaction leukotriene C4(in) + ATP + H2O = leukotriene C4(out) + ADP + phosphate + H(+). It carries out the reaction 17beta-estradiol 17-O-(beta-D-glucuronate)(in) + ATP + H2O = 17beta-estradiol 17-O-(beta-D-glucuronate)(out) + ADP + phosphate + H(+). The catalysed reaction is (4Z,15Z)-bilirubin IXalpha C8-beta-D-glucuronoside(in) + ATP + H2O = (4Z,15Z)-bilirubin IXalpha C8-beta-D-glucuronoside(out) + ADP + phosphate + H(+). The enzyme catalyses (4Z,15Z)-bilirubin IXalpha C8,C12-beta-D-bisglucuronoside(in) + ATP + H2O = (4Z,15Z)-bilirubin IXalpha C8,C12-beta-D-bisglucuronoside(out) + ADP + phosphate + H(+). In terms of biological role, ATP-dependent transporter of the ATP-binding cassette (ABC) family that binds and hydrolyzes ATP to enable active transport of various substrates including many drugs, toxicants and endogenous compound across cell membranes. Transports a wide variety of conjugated organic anions such as sulfate-, glucuronide- and glutathione (GSH)-conjugates of endo- and xenobiotics substrates. Mediates hepatobiliary excretion of mono- and bis-glucuronidated bilirubin molecules and therefore play an important role in bilirubin detoxification. Also mediates hepatobiliary excretion of others glucuronide conjugates such as 17beta-estradiol 17-glucosiduronic acid and leukotriene C4. Transports sulfated bile salt such as taurolithocholate sulfate. Transports various anticancer drugs, such as anthracycline, vinca alkaloid and methotrexate and HIV-drugs such as protease inhibitors. Confers resistance to several anti-cancer drugs including cisplatin, doxorubicin, epirubicin, methotrexate, etoposide and vincristine. The sequence is that of ATP-binding cassette sub-family C member 2 from Homo sapiens (Human).